The sequence spans 341 residues: L-threonine 3-dehydrogenase (341 aa).

Cys-38 is a binding site for Zn(2+). Catalysis depends on charge relay system residues Thr-40 and His-43. His-63, Glu-64, Cys-93, Cys-96, Cys-99, and Cys-107 together coordinate Zn(2+). NAD(+)-binding positions include Ile-175, Asp-195, Arg-200, 262-264 (LGI), and 286-287 (IY).

The protein belongs to the zinc-containing alcohol dehydrogenase family. As to quaternary structure, homotetramer. Zn(2+) serves as cofactor.

It localises to the cytoplasm. It carries out the reaction L-threonine + NAD(+) = (2S)-2-amino-3-oxobutanoate + NADH + H(+). Its pathway is amino-acid degradation; L-threonine degradation via oxydo-reductase pathway; glycine from L-threonine: step 1/2. Its function is as follows. Catalyzes the NAD(+)-dependent oxidation of L-threonine to 2-amino-3-ketobutyrate. The chain is L-threonine 3-dehydrogenase from Escherichia coli (strain K12 / MC4100 / BW2952).